A 1755-amino-acid polypeptide reads, in one-letter code: Transposon Ty1-LR2 Gag-Pol polyprotein (1755 aa).

Polar residues-rich tracts occupy residues 1–23 (MESQQLSQHSPISHGSACASVTS), 48–60 (TKANSQQTTTPAS), and 127–152 (QSQFPQYPSSVGTPLSTPSPESGNTF). 3 disordered regions span residues 1–93 (MESQ…MMTQ), 126–174 (PQSQ…PPPM), and 352–421 (GSRN…SKST). Residues 153–165 (TDSSSADSDMTST) are compositionally biased toward low complexity. Residues 299 to 401 (NNGIHINNKV…NSKSKTARAH (103 aa)) are RNA-binding. The segment covering 402–418 (NVSTSNNSPSTDNDSIS) has biased composition (low complexity). Ser416 bears the Phosphoserine mark. Residue Asp461 is the For protease activity; shared with dimeric partner of the active site. An integrase-type zinc finger-like region spans residues 583-640 (NVHTSESTRKYPYPFIHRMLAHANAPTIRYSLKNNTITYFNESDVDWSSAIDYQCPDC). The Integrase catalytic domain occupies 660–835 (NSYEPFQYLH…AGLDISTLLP (176 aa)). Mg(2+)-binding residues include Asp671 and Asp736. Disordered stretches follow at residues 956-1087 (SKAV…ETEK), 1092-1111 (RSPSIDASPPENNSSHNIVP), and 1130-1187 (DLPL…DNET). Low complexity predominate over residues 960–969 (SPTDSTPPST). The segment covering 1005-1015 (STPQISNIEST) has biased composition (polar residues). Basic and acidic residues predominate over residues 1038–1053 (ESSHASKSKDFRHSDS). Composition is skewed to polar residues over residues 1054–1082 (YSENETNHTNVPISSTGGTNNKTVPQISD) and 1101–1111 (PENNSSHNIVP). The Bipartite nuclear localization signal signature appears at 1178 to 1212 (KKRSLEDNETEIKVSRDTWNTKNMRSLEPPRSKKR). The region spanning 1338-1476 (NNYYITQLDI…DILGLEIKYQ (139 aa)) is the Reverse transcriptase Ty1/copia-type domain. Mg(2+) is bound by residues Asp1346, Asp1427, Asp1428, Asp1610, Glu1652, and Asp1685. An RNase H Ty1/copia-type domain is found at 1610 to 1752 (DASYGNQPYY…IKTFKLLTNK (143 aa)).

In terms of assembly, the capsid protein forms a homotrimer, from which the VLPs are assembled. The protease is a homodimer, whose active site consists of two apposed aspartic acid residues. Initially, virus-like particles (VLPs) are composed of the structural unprocessed proteins Gag and Gag-Pol, and also contain the host initiator methionine tRNA (tRNA(i)-Met) which serves as a primer for minus-strand DNA synthesis, and a dimer of genomic Ty RNA. Processing of the polyproteins occurs within the particle and proceeds by an ordered pathway, called maturation. First, the protease (PR) is released by autocatalytic cleavage of the Gag-Pol polyprotein yielding capsid protein p45 and a Pol-p154 precursor protein. This cleavage is a prerequisite for subsequent processing of Pol-p154 at the remaining sites to release the mature structural and catalytic proteins. Maturation takes place prior to the RT reaction and is required to produce transposition-competent VLPs.

The protein localises to the cytoplasm. It is found in the nucleus. It carries out the reaction DNA(n) + a 2'-deoxyribonucleoside 5'-triphosphate = DNA(n+1) + diphosphate. The catalysed reaction is Endonucleolytic cleavage to 5'-phosphomonoester.. Functionally, capsid protein (CA) is the structural component of the virus-like particle (VLP), forming the shell that encapsulates the retrotransposons dimeric RNA genome. The particles are assembled from trimer-clustered units and there are holes in the capsid shells that allow for the diffusion of macromolecules. CA also has nucleocapsid-like chaperone activity, promoting primer tRNA(i)-Met annealing to the multipartite primer-binding site (PBS), dimerization of Ty1 RNA and initiation of reverse transcription. The aspartyl protease (PR) mediates the proteolytic cleavages of the Gag and Gag-Pol polyproteins after assembly of the VLP. In terms of biological role, reverse transcriptase/ribonuclease H (RT) is a multifunctional enzyme that catalyzes the conversion of the retro-elements RNA genome into dsDNA within the VLP. The enzyme displays a DNA polymerase activity that can copy either DNA or RNA templates, and a ribonuclease H (RNase H) activity that cleaves the RNA strand of RNA-DNA heteroduplexes during plus-strand synthesis and hydrolyzes RNA primers. The conversion leads to a linear dsDNA copy of the retrotransposon that includes long terminal repeats (LTRs) at both ends. Its function is as follows. Integrase (IN) targets the VLP to the nucleus, where a subparticle preintegration complex (PIC) containing at least integrase and the newly synthesized dsDNA copy of the retrotransposon must transit the nuclear membrane. Once in the nucleus, integrase performs the integration of the dsDNA into the host genome. This Saccharomyces cerevisiae (strain ATCC 204508 / S288c) (Baker's yeast) protein is Transposon Ty1-LR2 Gag-Pol polyprotein (TY1B-LR2).